We begin with the raw amino-acid sequence, 200 residues long: Large ribosomal subunit protein uL4 (200 aa).

A disordered region spans residues 44 to 71; sequence AQKTRAEVSGGGKKPWRQKGTGRARAGS.

Belongs to the universal ribosomal protein uL4 family. As to quaternary structure, part of the 50S ribosomal subunit.

Its function is as follows. One of the primary rRNA binding proteins, this protein initially binds near the 5'-end of the 23S rRNA. It is important during the early stages of 50S assembly. It makes multiple contacts with different domains of the 23S rRNA in the assembled 50S subunit and ribosome. Functionally, forms part of the polypeptide exit tunnel. In Psychrobacter sp. (strain PRwf-1), this protein is Large ribosomal subunit protein uL4.